Consider the following 93-residue polypeptide: Small ribosomal subunit protein bS6 (93 aa).

Belongs to the bacterial ribosomal protein bS6 family.

In terms of biological role, binds together with bS18 to 16S ribosomal RNA. The sequence is that of Small ribosomal subunit protein bS6 (rpsF) from Treponema pallidum (strain Nichols).